We begin with the raw amino-acid sequence, 378 residues long: UDP-4-amino-4-deoxy-L-arabinose--oxoglutarate aminotransferase (378 aa).

Lys-182 carries the post-translational modification N6-(pyridoxal phosphate)lysine.

The protein belongs to the DegT/DnrJ/EryC1 family. ArnB subfamily. As to quaternary structure, homodimer. It depends on pyridoxal 5'-phosphate as a cofactor.

It catalyses the reaction UDP-4-amino-4-deoxy-beta-L-arabinose + 2-oxoglutarate = UDP-beta-L-threo-pentopyranos-4-ulose + L-glutamate. The protein operates within nucleotide-sugar biosynthesis; UDP-4-deoxy-4-formamido-beta-L-arabinose biosynthesis; UDP-4-deoxy-4-formamido-beta-L-arabinose from UDP-alpha-D-glucuronate: step 2/3. Its pathway is bacterial outer membrane biogenesis; lipopolysaccharide biosynthesis. Catalyzes the conversion of UDP-4-keto-arabinose (UDP-Ara4O) to UDP-4-amino-4-deoxy-L-arabinose (UDP-L-Ara4N). The modified arabinose is attached to lipid A and is required for resistance to polymyxin and cationic antimicrobial peptides. In Aeromonas salmonicida (strain A449), this protein is UDP-4-amino-4-deoxy-L-arabinose--oxoglutarate aminotransferase.